A 137-amino-acid polypeptide reads, in one-letter code: uncharacterized protein (137 aa).

The N-terminal stretch at 1–19 is a signal peptide; it reads MVAFYGIFLFGTVYLFGLA.

This is an uncharacterized protein from Acanthamoeba polyphaga (Amoeba).